We begin with the raw amino-acid sequence, 285 residues long: Polyamine aminopropyltransferase (285 aa).

The 237-residue stretch at 5–241 (DNWYIEHFQP…GWWSVTMASK (237 aa)) folds into the PABS domain. Glutamine 35 provides a ligand contact to S-methyl-5'-thioadenosine. Residues histidine 66 and aspartate 90 each coordinate spermidine. Residues aspartate 110 and 141–142 (DG) each bind S-methyl-5'-thioadenosine. Catalysis depends on aspartate 160, which acts as the Proton acceptor. A spermidine-binding site is contributed by 160–163 (DSTD). Proline 167 is an S-methyl-5'-thioadenosine binding site.

It belongs to the spermidine/spermine synthase family. In terms of assembly, homodimer or homotetramer.

The protein resides in the cytoplasm. It catalyses the reaction S-adenosyl 3-(methylsulfanyl)propylamine + putrescine = S-methyl-5'-thioadenosine + spermidine + H(+). It functions in the pathway amine and polyamine biosynthesis; spermidine biosynthesis; spermidine from putrescine: step 1/1. In terms of biological role, catalyzes the irreversible transfer of a propylamine group from the amino donor S-adenosylmethioninamine (decarboxy-AdoMet) to putrescine (1,4-diaminobutane) to yield spermidine. This chain is Polyamine aminopropyltransferase, found in Xanthomonas axonopodis pv. citri (strain 306).